The sequence spans 611 residues: Glutamine--fructose-6-phosphate aminotransferase [isomerizing] (611 aa).

The active-site Nucleophile; for GATase activity is cysteine 2. Positions 2 to 219 (CGIVGGVSKT…DGDVAMLQRQ (218 aa)) constitute a Glutamine amidotransferase type-2 domain. SIS domains are found at residues 287-427 (AAAM…APGA) and 460-601 (WAAR…VDRP). The active-site For Fru-6P isomerization activity is lysine 606.

As to quaternary structure, homodimer.

It localises to the cytoplasm. It carries out the reaction D-fructose 6-phosphate + L-glutamine = D-glucosamine 6-phosphate + L-glutamate. Its function is as follows. Catalyzes the first step in hexosamine metabolism, converting fructose-6P into glucosamine-6P using glutamine as a nitrogen source. The chain is Glutamine--fructose-6-phosphate aminotransferase [isomerizing] from Acidithiobacillus ferridurans.